We begin with the raw amino-acid sequence, 75 residues long: MARFFRRRKFCRFTAEGTKRIDYKDIETLKAYITETGKIVPSRITGTKAKYQRQLATAIKRARYLALIPYTDSHE.

The protein belongs to the bacterial ribosomal protein bS18 family. Part of the 30S ribosomal subunit. Forms a tight heterodimer with protein bS6.

Its function is as follows. Binds as a heterodimer with protein bS6 to the central domain of the 16S rRNA, where it helps stabilize the platform of the 30S subunit. The chain is Small ribosomal subunit protein bS18 from Cellvibrio japonicus (strain Ueda107) (Pseudomonas fluorescens subsp. cellulosa).